The primary structure comprises 101 residues: Small ribosomal subunit protein uS14 (101 aa).

It belongs to the universal ribosomal protein uS14 family. Part of the 30S ribosomal subunit. Contacts proteins S3 and S10.

Binds 16S rRNA, required for the assembly of 30S particles and may also be responsible for determining the conformation of the 16S rRNA at the A site. The sequence is that of Small ribosomal subunit protein uS14 from Paraburkholderia phymatum (strain DSM 17167 / CIP 108236 / LMG 21445 / STM815) (Burkholderia phymatum).